The primary structure comprises 92 residues: N(2)-fixation sustaining protein CowN (92 aa).

The protein belongs to the CowN family.

In terms of biological role, is required to sustain N(2)-dependent growth in the presence of low levels of carbon monoxide (CO). Probably acts by protecting the N(2) fixation ability of the nitrogenase complex, which is inactivated in the presence of CO. The protein is N(2)-fixation sustaining protein CowN of Rhodobacter capsulatus (strain ATCC BAA-309 / NBRC 16581 / SB1003).